Consider the following 186-residue polypeptide: Elongation factor P (186 aa).

Belongs to the elongation factor P family.

It is found in the cytoplasm. The protein operates within protein biosynthesis; polypeptide chain elongation. Functionally, involved in peptide bond synthesis. Stimulates efficient translation and peptide-bond synthesis on native or reconstituted 70S ribosomes in vitro. Probably functions indirectly by altering the affinity of the ribosome for aminoacyl-tRNA, thus increasing their reactivity as acceptors for peptidyl transferase. The protein is Elongation factor P of Prochlorococcus marinus (strain MIT 9312).